Consider the following 750-residue polypeptide: von Willebrand factor A domain-containing protein DDB_G0292188 (750 aa).

Residues 17–249 (EIKTVFNSDS…IKDDLLLDVV (233 aa)) enclose the VWFA domain. Low complexity-rich tracts occupy residues 586–595 (SINDNNNSFN) and 603–645 (PFFE…SSAS). Positions 586 to 657 (SINDNNNSFN…PPPSQMLNEQ (72 aa)) are disordered.

This Dictyostelium discoideum (Social amoeba) protein is von Willebrand factor A domain-containing protein DDB_G0292188.